Here is a 552-residue protein sequence, read N- to C-terminus: Hydroxylamine reductase (552 aa).

[2Fe-2S] cluster-binding residues include cysteine 3, cysteine 6, cysteine 18, and cysteine 25. Positions 250, 274, 318, 406, 434, 459, 493, and 495 each coordinate hybrid [4Fe-2O-2S] cluster. A Cysteine persulfide modification is found at cysteine 406.

It belongs to the HCP family. It depends on [2Fe-2S] cluster as a cofactor. The cofactor is hybrid [4Fe-2O-2S] cluster.

The protein localises to the cytoplasm. The enzyme catalyses A + NH4(+) + H2O = hydroxylamine + AH2 + H(+). Functionally, catalyzes the reduction of hydroxylamine to form NH(3) and H(2)O. This chain is Hydroxylamine reductase, found in Shewanella woodyi (strain ATCC 51908 / MS32).